The sequence spans 547 residues: Glucose-6-phosphate isomerase (547 aa).

The active-site Proton donor is the E352. Catalysis depends on residues H383 and K511.

It belongs to the GPI family.

It is found in the cytoplasm. It catalyses the reaction alpha-D-glucose 6-phosphate = beta-D-fructose 6-phosphate. The protein operates within carbohydrate biosynthesis; gluconeogenesis. It participates in carbohydrate degradation; glycolysis; D-glyceraldehyde 3-phosphate and glycerone phosphate from D-glucose: step 2/4. In terms of biological role, catalyzes the reversible isomerization of glucose-6-phosphate to fructose-6-phosphate. In Magnetococcus marinus (strain ATCC BAA-1437 / JCM 17883 / MC-1), this protein is Glucose-6-phosphate isomerase.